A 305-amino-acid polypeptide reads, in one-letter code: tRNA pseudouridine synthase B (305 aa).

Aspartate 41 serves as the catalytic Nucleophile.

The protein belongs to the pseudouridine synthase TruB family. Type 1 subfamily.

It catalyses the reaction uridine(55) in tRNA = pseudouridine(55) in tRNA. In terms of biological role, responsible for synthesis of pseudouridine from uracil-55 in the psi GC loop of transfer RNAs. In Prochlorococcus marinus (strain MIT 9301), this protein is tRNA pseudouridine synthase B.